We begin with the raw amino-acid sequence, 249 residues long: Vesicle-associated membrane protein-associated protein A (249 aa).

N-acetylalanine is present on alanine 2. Residues 2 to 227 are Cytoplasmic-facing; it reads ASASGTMAKH…VSFRENVTSP (226 aa). In terms of domain architecture, MSP spans 14-131; the sequence is ILVLDPPTDL…MDSKLRCVFE (118 aa). The interval 50 to 53 is phosphorylated FFAT motif binding; sequence KVKT. Lysine 125 carries the post-translational modification N6-acetyllysine. Position 166 is a phosphoserine (serine 166). Positions 169 to 205 form a coiled coil; it reads DTETRKLVEECKRLQGEMMKLSEENRLLRDEGLRLRK. Phosphothreonine is present on threonine 170. Residues serine 214, serine 216, and serine 219 each carry the phosphoserine modification. The chain crosses the membrane as a helical; Anchor for type IV membrane protein span at residues 228–248; it reads LPSLLVVIAAIFIGFFLGKFI.

The protein belongs to the VAMP-associated protein (VAP) (TC 9.B.17) family. As to quaternary structure, homodimer; disulfide-linked. Heterodimer with VAPB. Interacts with VAMP1, VAMP2, STX1A, BET1, SEC22C and with the C-terminal domain of OCLN. Interacts (via MSP domain) with OSBPL1A (via FFAT motif). Interacts (via MSP domain) with ZFYVE27; may retain ZFYVE27 in the endoplasmic reticulum and regulate its function in cell projections formation. Interacts with OSBP. Interacts (via C-terminus) with RSAD2/viperin (via C-terminus). Interacts with IFITM3. Interacts with OSBPL3 (phosphorylated form). Interacts with KIF5A in a ZFYVE27-dependent manner. Interacts (via MSP domain) with STARD3 (via phosphorylated FFAT motif); this interaction recruits VAPA to the endosome. Interacts with STARD3NL (via FFAT motif). Interacts with CERT1. Interacts with PLEKHA3 and SACM1L to form a ternary complex. Interacts with VPS13A (via FFAT motif). Interacts with RB1CC1 (via phosphorylated FFAT motif), MIGA2 (via phosphorylated FFAT motif), RMDN3 (via phosphorylated FFAT motif), KCNB1 (via phosphorylated FFAT motif) and KCNB2 (via phosphorylated FFAT motif). Interacts (via MSP domain) with WDR44 (via FFAT-like motif); the interactions connect the endoplasmic reticulum (ER) with the endosomal tubule.

It is found in the endoplasmic reticulum membrane. Its subcellular location is the cell junction. The protein resides in the tight junction. It localises to the cell membrane. Functionally, endoplasmic reticulum (ER)-anchored protein that mediates the formation of contact sites between the ER and endosomes via interaction with FFAT motif-containing proteins such as STARD3 or WDR44. STARD3-VAPA interaction enables cholesterol transfer from the ER to endosomes. Via interaction with WDR44 participates in neosynthesized protein export. In addition, recruited to the plasma membrane through OSBPL3 binding. The OSBPL3-VAPA complex stimulates RRAS signaling which in turn attenuates integrin beta-1 (ITGB1) activation at the cell surface. With OSBPL3, may regulate ER morphology. May play a role in vesicle trafficking. This is Vesicle-associated membrane protein-associated protein A from Bos taurus (Bovine).